Here is a 212-residue protein sequence, read N- to C-terminus: Guanylate kinase (212 aa).

The Guanylate kinase-like domain occupies 7–187 (GLLIVLSGPS…AADRIIAIIR (181 aa)). An ATP-binding site is contributed by 14–21 (GPSGVGKA).

This sequence belongs to the guanylate kinase family.

The protein localises to the cytoplasm. The catalysed reaction is GMP + ATP = GDP + ADP. Functionally, essential for recycling GMP and indirectly, cGMP. This Onion yellows phytoplasma (strain OY-M) protein is Guanylate kinase.